The primary structure comprises 692 residues: Elongation factor G (692 aa).

One can recognise a tr-type G domain in the interval 8–283 (NRIRNIGIAA…AVIDYLPAPT (276 aa)). GTP contacts are provided by residues 17-24 (AHIDAGKT), 81-85 (DTPGH), and 135-138 (NKMD).

It belongs to the TRAFAC class translation factor GTPase superfamily. Classic translation factor GTPase family. EF-G/EF-2 subfamily.

It localises to the cytoplasm. Functionally, catalyzes the GTP-dependent ribosomal translocation step during translation elongation. During this step, the ribosome changes from the pre-translocational (PRE) to the post-translocational (POST) state as the newly formed A-site-bound peptidyl-tRNA and P-site-bound deacylated tRNA move to the P and E sites, respectively. Catalyzes the coordinated movement of the two tRNA molecules, the mRNA and conformational changes in the ribosome. The protein is Elongation factor G of Helicobacter pylori (strain P12).